We begin with the raw amino-acid sequence, 375 residues long: uncharacterized protein (375 aa).

Lys99 participates in a covalent cross-link: Isoglutamyl lysine isopeptide (Lys-Gln) (interchain with Q-Cter in protein Pup).

This sequence belongs to the IMPDH/GMPR family.

This is an uncharacterized protein from Mycolicibacterium smegmatis (strain ATCC 700084 / mc(2)155) (Mycobacterium smegmatis).